The chain runs to 207 residues: LexA repressor (207 aa).

The H-T-H motif DNA-binding region spans 28-48 (RAEIAQKLGFKSANAAEEHLK). Catalysis depends on for autocatalytic cleavage activity residues S124 and K161.

The protein belongs to the peptidase S24 family. As to quaternary structure, homodimer.

It carries out the reaction Hydrolysis of Ala-|-Gly bond in repressor LexA.. Represses a number of genes involved in the response to DNA damage (SOS response), including recA and lexA. In the presence of single-stranded DNA, RecA interacts with LexA causing an autocatalytic cleavage which disrupts the DNA-binding part of LexA, leading to derepression of the SOS regulon and eventually DNA repair. This Aeromonas salmonicida (strain A449) protein is LexA repressor.